Reading from the N-terminus, the 325-residue chain is Collagen alpha-1(IX) chain (325 aa).

Over residues proline 1–leucine 54 the composition is skewed to low complexity. Disordered regions lie at residues proline 1 to aspartate 163 and arginine 187 to lysine 325. Residues arginine 198–proline 208 are compositionally biased toward pro residues. The segment covering proline 237–proline 249 has biased composition (basic and acidic residues). Pro residues predominate over residues valine 292–phenylalanine 304.

It belongs to the fibril-associated collagens with interrupted helices (FACIT) family. As to quaternary structure, heterotrimer of an alpha 1(IX), an alpha 2(IX) and an alpha 3(IX) chain. Covalently linked to the telopeptides of type II collagen by lysine-derived cross-links. In terms of processing, prolines at the third position of the tripeptide repeating unit (G-X-Y) are hydroxylated in some or all of the chains.

It localises to the secreted. The protein resides in the extracellular space. It is found in the extracellular matrix. Structural component of hyaline cartilage and vitreous of the eye. In Rattus norvegicus (Rat), this protein is Collagen alpha-1(IX) chain (Col9a1).